A 69-amino-acid chain; its full sequence is UPF0337 protein YjbJ (69 aa).

Belongs to the UPF0337 (CsbD) family.

The protein is UPF0337 protein YjbJ (yjbJ) of Escherichia coli O6:H1 (strain CFT073 / ATCC 700928 / UPEC).